We begin with the raw amino-acid sequence, 121 residues long: Large ribosomal subunit protein eL34A (121 aa).

The protein belongs to the eukaryotic ribosomal protein eL34 family. Component of the large ribosomal subunit (LSU). Mature yeast ribosomes consist of a small (40S) and a large (60S) subunit. The 40S small subunit contains 1 molecule of ribosomal RNA (18S rRNA) and 33 different proteins (encoded by 57 genes). The large 60S subunit contains 3 rRNA molecules (25S, 5.8S and 5S rRNA) and 46 different proteins (encoded by 81 genes).

It is found in the cytoplasm. Its function is as follows. Component of the ribosome, a large ribonucleoprotein complex responsible for the synthesis of proteins in the cell. The small ribosomal subunit (SSU) binds messenger RNAs (mRNAs) and translates the encoded message by selecting cognate aminoacyl-transfer RNA (tRNA) molecules. The large subunit (LSU) contains the ribosomal catalytic site termed the peptidyl transferase center (PTC), which catalyzes the formation of peptide bonds, thereby polymerizing the amino acids delivered by tRNAs into a polypeptide chain. The nascent polypeptides leave the ribosome through a tunnel in the LSU and interact with protein factors that function in enzymatic processing, targeting, and the membrane insertion of nascent chains at the exit of the ribosomal tunnel. In Saccharomyces cerevisiae (strain ATCC 204508 / S288c) (Baker's yeast), this protein is Large ribosomal subunit protein eL34A.